The primary structure comprises 424 residues: Insertion element IS2A uncharacterized 48.2 kDa protein (424 aa).

Residues Lys229–Ala412 enclose the Integrase catalytic domain.

Belongs to the transposase 8 family.

This is Insertion element IS2A uncharacterized 48.2 kDa protein from Escherichia coli.